Consider the following 252-residue polypeptide: Ribosomal RNA small subunit methyltransferase J (252 aa).

S-adenosyl-L-methionine contacts are provided by residues 126–127 (ER) and D176.

Belongs to the methyltransferase superfamily. RsmJ family.

It localises to the cytoplasm. The catalysed reaction is guanosine(1516) in 16S rRNA + S-adenosyl-L-methionine = N(2)-methylguanosine(1516) in 16S rRNA + S-adenosyl-L-homocysteine + H(+). Specifically methylates the guanosine in position 1516 of 16S rRNA. This is Ribosomal RNA small subunit methyltransferase J from Bdellovibrio bacteriovorus (strain ATCC 15356 / DSM 50701 / NCIMB 9529 / HD100).